The following is a 661-amino-acid chain: tRNA uridine 5-carboxymethylaminomethyl modification enzyme MnmG (661 aa).

FAD is bound by residues 16-21, Val128, and Ser183; that span reads GAGHAG. The interval 206-230 is disordered; the sequence is PRVNGNTIDYSKTEEEPGDKTPRHF. Basic and acidic residues predominate over residues 216 to 230; the sequence is SKTEEEPGDKTPRHF. 277-291 contributes to the NAD(+) binding site; the sequence is GPRYCPSIEDKVVRF. Gln374 contributes to the FAD binding site.

The protein belongs to the MnmG family. Homodimer. Heterotetramer of two MnmE and two MnmG subunits. It depends on FAD as a cofactor.

It localises to the cytoplasm. Its function is as follows. NAD-binding protein involved in the addition of a carboxymethylaminomethyl (cmnm) group at the wobble position (U34) of certain tRNAs, forming tRNA-cmnm(5)s(2)U34. This Lactobacillus helveticus (strain DPC 4571) protein is tRNA uridine 5-carboxymethylaminomethyl modification enzyme MnmG.